A 278-amino-acid polypeptide reads, in one-letter code: Ankyrin repeat and SOCS box protein 13 (278 aa).

ANK repeat units follow at residues 18–47, 51–80, 84–113, 116–145, 149–178, and 181–210; these read VERTPVHEAAQRGESLQLQQLIDSGACVNQ, DSITPLHAASLQGQAQCVQLLLAAGAQVDA, DGSTPLCDACASGSIECVKLLLSYGAKVNP, YTASPLHEACMSGSSECVRLLIDVGANLEA, HFGTPLHVACAREHLDCVKVLLNAGANVNA, and LHETALHHAAKVKNVDLIEMLIEFGGNIYA. The SOCS box domain occupies 229–278; that stretch reads AKCFEYYEKTPLSLSQLCRVSLRKATGVRGLEKVAKLNIPPRLIDYLSYN.

Belongs to the ankyrin SOCS box (ASB) family.

It functions in the pathway protein modification; protein ubiquitination. May be a substrate-recognition component of a SCF-like ECS (Elongin-Cullin-SOCS-box protein) E3 ubiquitin-protein ligase complex which mediates the ubiquitination and subsequent proteasomal degradation of target proteins. In Mus musculus (Mouse), this protein is Ankyrin repeat and SOCS box protein 13 (Asb13).